The following is a 112-amino-acid chain: Protein lin-52 homolog (112 aa).

This sequence belongs to the lin-52 family. Component of the DREAM complex.

In Gallus gallus (Chicken), this protein is Protein lin-52 homolog (LIN52).